The primary structure comprises 465 residues: Ribulose bisphosphate carboxylase large chain (465 aa).

Lys4 carries the post-translational modification N6,N6,N6-trimethyllysine. Residues Asn113 and Thr163 each coordinate substrate. The active-site Proton acceptor is the Lys165. Position 167 (Lys167) interacts with substrate. The Mg(2+) site is built by Lys191, Asp193, and Glu194. Lys191 is subject to N6-carboxylysine. The Proton acceptor role is filled by His284. Substrate is bound by residues Arg285, His317, and Ser369.

Belongs to the RuBisCO large chain family. Type I subfamily. Heterohexadecamer of 8 large chains and 8 small chains; disulfide-linked. The disulfide link is formed within the large subunit homodimers. Requires Mg(2+) as cofactor. Post-translationally, the disulfide bond which can form in the large chain dimeric partners within the hexadecamer appears to be associated with oxidative stress and protein turnover.

The protein resides in the plastid. It localises to the chloroplast. The enzyme catalyses 2 (2R)-3-phosphoglycerate + 2 H(+) = D-ribulose 1,5-bisphosphate + CO2 + H2O. It carries out the reaction D-ribulose 1,5-bisphosphate + O2 = 2-phosphoglycolate + (2R)-3-phosphoglycerate + 2 H(+). Functionally, ruBisCO catalyzes two reactions: the carboxylation of D-ribulose 1,5-bisphosphate, the primary event in carbon dioxide fixation, as well as the oxidative fragmentation of the pentose substrate in the photorespiration process. Both reactions occur simultaneously and in competition at the same active site. This chain is Ribulose bisphosphate carboxylase large chain, found in Hamamelis mollis (Chinese witch hazel).